The sequence spans 225 residues: NAD(P)H-quinone oxidoreductase subunit K, chloroplastic (225 aa).

Positions 43, 44, 108, and 139 each coordinate [4Fe-4S] cluster.

This sequence belongs to the complex I 20 kDa subunit family. NDH is composed of at least 16 different subunits, 5 of which are encoded in the nucleus. [4Fe-4S] cluster is required as a cofactor.

The protein resides in the plastid. It localises to the chloroplast thylakoid membrane. It carries out the reaction a plastoquinone + NADH + (n+1) H(+)(in) = a plastoquinol + NAD(+) + n H(+)(out). The enzyme catalyses a plastoquinone + NADPH + (n+1) H(+)(in) = a plastoquinol + NADP(+) + n H(+)(out). Its function is as follows. NDH shuttles electrons from NAD(P)H:plastoquinone, via FMN and iron-sulfur (Fe-S) centers, to quinones in the photosynthetic chain and possibly in a chloroplast respiratory chain. The immediate electron acceptor for the enzyme in this species is believed to be plastoquinone. Couples the redox reaction to proton translocation, and thus conserves the redox energy in a proton gradient. The chain is NAD(P)H-quinone oxidoreductase subunit K, chloroplastic from Lemna minor (Common duckweed).